A 138-amino-acid chain; its full sequence is Small ribosomal subunit protein uS12 (138 aa).

Residues 33–55 (KEHTNVSSPQKRGVCTRVGTMTP) are disordered.

The protein belongs to the universal ribosomal protein uS12 family. In terms of assembly, part of the 30S ribosomal subunit. Contacts proteins S8 and S17. May interact with IF1 in the 30S initiation complex. Interacts with BrxC.

Functionally, with S4 and S5 plays an important role in translational accuracy. Interacts with and stabilizes bases of the 16S rRNA that are involved in tRNA selection in the A site and with the mRNA backbone. Located at the interface of the 30S and 50S subunits, it traverses the body of the 30S subunit contacting proteins on the other side and probably holding the rRNA structure together. The combined cluster of proteins S8, S12 and S17 appears to hold together the shoulder and platform of the 30S subunit. This is Small ribosomal subunit protein uS12 (rpsL) from Bacillus subtilis (strain 168).